We begin with the raw amino-acid sequence, 118 residues long: Small ribosomal subunit protein uS13 (118 aa).

Residues 91–118 form a disordered region; that stretch reads HRRGLPVRGQRTKTNARTRKGPRKPIKK.

This sequence belongs to the universal ribosomal protein uS13 family. Part of the 30S ribosomal subunit. Forms a loose heterodimer with protein S19. Forms two bridges to the 50S subunit in the 70S ribosome.

In terms of biological role, located at the top of the head of the 30S subunit, it contacts several helices of the 16S rRNA. In the 70S ribosome it contacts the 23S rRNA (bridge B1a) and protein L5 of the 50S subunit (bridge B1b), connecting the 2 subunits; these bridges are implicated in subunit movement. Contacts the tRNAs in the A and P-sites. This Photorhabdus laumondii subsp. laumondii (strain DSM 15139 / CIP 105565 / TT01) (Photorhabdus luminescens subsp. laumondii) protein is Small ribosomal subunit protein uS13.